A 291-amino-acid polypeptide reads, in one-letter code: 4-diphosphocytidyl-2-C-methyl-D-erythritol kinase (291 aa).

Lys10 is a catalytic residue. Residue 94–104 (PVSAGLAGGSS) coordinates ATP. Asp136 is an active-site residue.

Belongs to the GHMP kinase family. IspE subfamily.

The catalysed reaction is 4-CDP-2-C-methyl-D-erythritol + ATP = 4-CDP-2-C-methyl-D-erythritol 2-phosphate + ADP + H(+). It functions in the pathway isoprenoid biosynthesis; isopentenyl diphosphate biosynthesis via DXP pathway; isopentenyl diphosphate from 1-deoxy-D-xylulose 5-phosphate: step 3/6. Functionally, catalyzes the phosphorylation of the position 2 hydroxy group of 4-diphosphocytidyl-2C-methyl-D-erythritol. The chain is 4-diphosphocytidyl-2-C-methyl-D-erythritol kinase from Listeria monocytogenes serotype 4a (strain HCC23).